Consider the following 76-residue polypeptide: Antimicrobial peptide Smp24 (76 aa).

The signal sequence occupies residues 1-22 (MQYKTFLVIFMAYLLVTHEAEA). The propeptide occupies 47–76 (SKRKRDVEDFFDPYQRDLDLELERLLSQLQ).

This sequence belongs to the non-disulfide-bridged peptide (NDBP) superfamily. Medium-length antimicrobial peptide (group 3) family. In terms of tissue distribution, expressed by the venom gland.

The protein resides in the secreted. It is found in the target cell membrane. Peptide that shows antimicrobial activity, moderate cytolysis on eukaryote cells and interference with DNA synthesis. Has potent activity against Gram-positive bacteria and moderate activity against Gram-negative bacteria, as well as moderate activity against fungi. Acts by inducing bacterial membrane disruption. Uses multiple modes of action depending on the membrane lipid composition. Uses a toroidal pore mechanism against the prokaryotic like membrane and forms hexagonal phase non-lamellar structures in eukaryotic-like membrane. Shows activity against B.subtilis (MIC=4 ug/ml), S.epidermidis (MIC=8 ug/ml), S.aureus (MIC=8 ug/ml), E.coli (MIC=64 ug/ml), K.pneumoniae (MIC=128 ug/ml), P.aeruginosa (MIC=256 ug/ml), and C.albicans (MIC=32 ug/ml). Shows moderate hemolysis activity. This chain is Antimicrobial peptide Smp24, found in Scorpio palmatus (Israeli golden scorpion).